Consider the following 476-residue polypeptide: Aspartyl/glutamyl-tRNA(Asn/Gln) amidotransferase subunit B (476 aa).

It belongs to the GatB/GatE family. GatB subfamily. In terms of assembly, heterotrimer of A, B and C subunits.

It catalyses the reaction L-glutamyl-tRNA(Gln) + L-glutamine + ATP + H2O = L-glutaminyl-tRNA(Gln) + L-glutamate + ADP + phosphate + H(+). The enzyme catalyses L-aspartyl-tRNA(Asn) + L-glutamine + ATP + H2O = L-asparaginyl-tRNA(Asn) + L-glutamate + ADP + phosphate + 2 H(+). Allows the formation of correctly charged Asn-tRNA(Asn) or Gln-tRNA(Gln) through the transamidation of misacylated Asp-tRNA(Asn) or Glu-tRNA(Gln) in organisms which lack either or both of asparaginyl-tRNA or glutaminyl-tRNA synthetases. The reaction takes place in the presence of glutamine and ATP through an activated phospho-Asp-tRNA(Asn) or phospho-Glu-tRNA(Gln). In Bacillus velezensis (strain DSM 23117 / BGSC 10A6 / LMG 26770 / FZB42) (Bacillus amyloliquefaciens subsp. plantarum), this protein is Aspartyl/glutamyl-tRNA(Asn/Gln) amidotransferase subunit B.